We begin with the raw amino-acid sequence, 25 residues long: Large ribosomal subunit protein uL29 (25 aa).

This sequence belongs to the universal ribosomal protein uL29 family.

The chain is Large ribosomal subunit protein uL29 (rpmC) from Brevundimonas vesicularis (Pseudomonas vesicularis).